The chain runs to 381 residues: Acetyl-CoA:oxalate CoA-transferase (381 aa).

The active site involves His-233.

The protein belongs to the CoA-transferase III family. In terms of assembly, homodimer.

It carries out the reaction oxalate + acetyl-CoA = oxalyl-CoA + acetate. In terms of biological role, involved in the catabolism of oxalate and in the adapatation to low pH. ACOCT serves to prime the oxalate-induced acid tolerance response (ATR) cycle by producing substrate for oxalyl-CoA decarboxylase (OXC) and formyl-coenzyme A transferase (FCOCT). Catalyzes the reversible conversion of acetyl-CoA and oxalate to oxalyl-CoA and acetate. It can also use formyl-CoA and oxalate to produce oxalyl-CoA and formate with significantly reduced specific activity. In Escherichia coli (strain K12), this protein is Acetyl-CoA:oxalate CoA-transferase (yfdE).